A 715-amino-acid chain; its full sequence is Formate dehydrogenase H (715 aa).

A 4Fe-4S Mo/W bis-MGD-type domain is found at 1–56 (MKKVVTVCPYCASGCKINLVVDNGKIVRAEAAQGKTNQGTLCLKGYYGWDFINDTQ). Residues Cys8, Cys11, Cys15, and Cys42 each contribute to the [4Fe-4S] cluster site. The active-site Electron donor/acceptor is Lys44. Mo-bis(molybdopterin guanine dinucleotide) is bound by residues Arg110, Sec140, Asn176, Asp179, Ser180, Cys201, Asp202, Arg204, Gly221, Asn223, Met297, Gln335, Asp404, Thr408, Gln428, Asp429, Ser445, Asp478, Arg581, Glu582, His585, Ser587, Tyr678, and Lys679. The Proton donor/acceptor role is filled by Sec140. A non-standard amino acid (selenocysteine) is located at residue Sec140.

It belongs to the prokaryotic molybdopterin-containing oxidoreductase family. Consists of two separable enzymatic activities: a formate dehydrogenase component (FDH-H) and hydrogenase-3. Requires [4Fe-4S] cluster as cofactor. The cofactor is Mo-bis(molybdopterin guanine dinucleotide).

It catalyses the reaction formate + A + H(+) = AH2 + CO2. With respect to regulation, inhibited by aerobic conditions. Decomposes formic acid to hydrogen and carbon dioxide under anaerobic conditions in the absence of exogenous electron acceptors. This is Formate dehydrogenase H (fdhF) from Escherichia coli (strain K12).